A 117-amino-acid chain; its full sequence is Ribosome-binding factor A (117 aa).

The protein belongs to the RbfA family. As to quaternary structure, monomer. Binds 30S ribosomal subunits, but not 50S ribosomal subunits or 70S ribosomes.

It localises to the cytoplasm. Functionally, one of several proteins that assist in the late maturation steps of the functional core of the 30S ribosomal subunit. Associates with free 30S ribosomal subunits (but not with 30S subunits that are part of 70S ribosomes or polysomes). Required for efficient processing of 16S rRNA. May interact with the 5'-terminal helix region of 16S rRNA. This Leptospira interrogans serogroup Icterohaemorrhagiae serovar Lai (strain 56601) protein is Ribosome-binding factor A.